The chain runs to 202 residues: Glycoprotein U22 (202 aa).

The signal sequence occupies residues 1 to 20 (MVPQGCSLVWVSALYVSVIA). Residues asparagine 54, asparagine 107, asparagine 112, and asparagine 125 are each glycosylated (N-linked (GlcNAc...) asparagine; by host). The helical transmembrane segment at 172–192 (FVYYCISVYLFAVVVLCSCWF) threads the bilayer.

The protein resides in the membrane. The chain is Glycoprotein U22 (U22) from Homo sapiens (Human).